A 73-amino-acid polypeptide reads, in one-letter code: Large ribosomal subunit protein bL31 (73 aa).

C16, C18, C36, and C39 together coordinate Zn(2+).

The protein belongs to the bacterial ribosomal protein bL31 family. Type A subfamily. As to quaternary structure, part of the 50S ribosomal subunit. Zn(2+) serves as cofactor.

Its function is as follows. Binds the 23S rRNA. The sequence is that of Large ribosomal subunit protein bL31 from Desulfotalea psychrophila (strain LSv54 / DSM 12343).